We begin with the raw amino-acid sequence, 62 residues long: Photosystem II reaction center protein Z (62 aa).

2 consecutive transmembrane segments (helical) span residues 8-28 (AVFALIITSSILLISVPVVFA) and 41-61 (FSGTSLWIGLVFLVGILNSLI).

It belongs to the PsbZ family. In terms of assembly, PSII is composed of 1 copy each of membrane proteins PsbA, PsbB, PsbC, PsbD, PsbE, PsbF, PsbH, PsbI, PsbJ, PsbK, PsbL, PsbM, PsbT, PsbY, PsbZ, Psb30/Ycf12, at least 3 peripheral proteins of the oxygen-evolving complex and a large number of cofactors. It forms dimeric complexes.

The protein resides in the plastid. It localises to the chloroplast thylakoid membrane. In terms of biological role, may control the interaction of photosystem II (PSII) cores with the light-harvesting antenna, regulates electron flow through the 2 photosystem reaction centers. PSII is a light-driven water plastoquinone oxidoreductase, using light energy to abstract electrons from H(2)O, generating a proton gradient subsequently used for ATP formation. The protein is Photosystem II reaction center protein Z of Arabidopsis thaliana (Mouse-ear cress).